The following is a 540-amino-acid chain: NAD(P)H-quinone oxidoreductase subunit 2 B, chloroplastic (540 aa).

Transmembrane regions (helical) follow at residues 24–44 (LLLFDGSLIFPECILIFGLIL), 57–77 (IPWLYFIPSTSLVMSITALLF), 99–119 (IFQFLILLCSTLCIPLSVEYI), 124–144 (MAITEFLLFVLTATLGGMFLC), 149–169 (FITIFVAPECFSLCSYLLSGY), 183–203 (YLLMGGASSSILVHGFSWLYG), 227–247 (PGISIALIFITVGIGFKLSPA), 325–345 (WHLLLEILAILSMILGNLIAI), 353–373 (MLAYSSIGQIGYVIIGIIVGD), 384–404 (YMLFYISMNLGTFACIVLFGL), 425–445 (ALSLALCLLSLGGLPPLAGFF), 448–468 (LYLFWCGWQAGLYFLVLIGLL), and 514–534 (MIVCVIASTIPGISMNPIIAI).

Belongs to the complex I subunit 2 family. As to quaternary structure, NDH is composed of at least 16 different subunits, 5 of which are encoded in the nucleus.

It is found in the plastid. It localises to the chloroplast thylakoid membrane. The enzyme catalyses a plastoquinone + NADH + (n+1) H(+)(in) = a plastoquinol + NAD(+) + n H(+)(out). It carries out the reaction a plastoquinone + NADPH + (n+1) H(+)(in) = a plastoquinol + NADP(+) + n H(+)(out). Functionally, NDH shuttles electrons from NAD(P)H:plastoquinone, via FMN and iron-sulfur (Fe-S) centers, to quinones in the photosynthetic chain and possibly in a chloroplast respiratory chain. The immediate electron acceptor for the enzyme in this species is believed to be plastoquinone. Couples the redox reaction to proton translocation, and thus conserves the redox energy in a proton gradient. This Coffea arabica (Arabian coffee) protein is NAD(P)H-quinone oxidoreductase subunit 2 B, chloroplastic.